Consider the following 331-residue polypeptide: Lipoyl synthase (331 aa).

Residues 1–33 (MSDALIATSSEAPQSPAEQYDPTRKQKSADKTA) are disordered. The span at 7–17 (ATSSEAPQSPA) shows a compositional bias: polar residues. Residues 21–33 (DPTRKQKSADKTA) are compositionally biased toward basic and acidic residues. Residues C78, C83, C89, C104, C108, C111, and S318 each coordinate [4Fe-4S] cluster. Positions 89-307 (CFGKGTATFM…EEEAYKMGFT (219 aa)) constitute a Radical SAM core domain.

Belongs to the radical SAM superfamily. Lipoyl synthase family. [4Fe-4S] cluster is required as a cofactor.

The protein resides in the cytoplasm. It catalyses the reaction [[Fe-S] cluster scaffold protein carrying a second [4Fe-4S](2+) cluster] + N(6)-octanoyl-L-lysyl-[protein] + 2 oxidized [2Fe-2S]-[ferredoxin] + 2 S-adenosyl-L-methionine + 4 H(+) = [[Fe-S] cluster scaffold protein] + N(6)-[(R)-dihydrolipoyl]-L-lysyl-[protein] + 4 Fe(3+) + 2 hydrogen sulfide + 2 5'-deoxyadenosine + 2 L-methionine + 2 reduced [2Fe-2S]-[ferredoxin]. It participates in protein modification; protein lipoylation via endogenous pathway; protein N(6)-(lipoyl)lysine from octanoyl-[acyl-carrier-protein]: step 2/2. In terms of biological role, catalyzes the radical-mediated insertion of two sulfur atoms into the C-6 and C-8 positions of the octanoyl moiety bound to the lipoyl domains of lipoate-dependent enzymes, thereby converting the octanoylated domains into lipoylated derivatives. The sequence is that of Lipoyl synthase from Cupriavidus necator (strain ATCC 17699 / DSM 428 / KCTC 22496 / NCIMB 10442 / H16 / Stanier 337) (Ralstonia eutropha).